A 663-amino-acid polypeptide reads, in one-letter code: DNA topoisomerase 4 subunit B (663 aa).

ATP-binding positions include tyrosine 21, asparagine 61, aspartate 88, 130–136, and lysine 360; that span reads GLHGVGI. Residues 440 to 554 enclose the Toprim domain; the sequence is TELFIVEGDS…EGHLYLAKPP (115 aa). Mg(2+)-binding residues include glutamate 446, aspartate 519, and aspartate 521.

This sequence belongs to the type II topoisomerase family. ParE type 1 subfamily. In terms of assembly, heterotetramer composed of ParC and ParE. Requires Mg(2+) as cofactor. Mn(2+) serves as cofactor. It depends on Ca(2+) as a cofactor.

The enzyme catalyses ATP-dependent breakage, passage and rejoining of double-stranded DNA.. In terms of biological role, topoisomerase IV is essential for chromosome segregation. It relaxes supercoiled DNA. Performs the decatenation events required during the replication of a circular DNA molecule. This is DNA topoisomerase 4 subunit B from Rickettsia typhi (strain ATCC VR-144 / Wilmington).